The primary structure comprises 375 residues: Putative F-box protein At5g52620 (375 aa).

In terms of domain architecture, F-box spans 5 to 52; sequence GKSDPIPIDIILDILSRLSTNSIAKFGLASKFCGSILRGQDFIELFLI.

In Arabidopsis thaliana (Mouse-ear cress), this protein is Putative F-box protein At5g52620.